We begin with the raw amino-acid sequence, 239 residues long: Large ribosomal subunit protein uL1 (239 aa).

The protein belongs to the universal ribosomal protein uL1 family. As to quaternary structure, part of the 50S ribosomal subunit.

In terms of biological role, binds directly to 23S rRNA. The L1 stalk is quite mobile in the ribosome, and is involved in E site tRNA release. Functionally, protein L1 is also a translational repressor protein, it controls the translation of the L11 operon by binding to its mRNA. The chain is Large ribosomal subunit protein uL1 from Mycolicibacterium gilvum (strain PYR-GCK) (Mycobacterium gilvum (strain PYR-GCK)).